The following is a 185-amino-acid chain: MLLVIGLGNPGKEYQYTRHNVGFIAIEKIVNQYNSSFSTKKKFNCEIAETISDGQKIIFIKPTTYMNLSGKSVISVKTYYNIYPAKIFVIHDDIDLETGRIKFKTGGGNGGHNGLKSIDGVIGNNYNRIRIGVGRPQNNQGVADYVLNHFSKPEYETVMQAIDRITSNFGLILENKLEEFKNKIA.

A tRNA-binding site is contributed by Y14. H19 serves as the catalytic Proton acceptor. 3 residues coordinate tRNA: Y65, N67, and N113.

This sequence belongs to the PTH family. Monomer.

It localises to the cytoplasm. The catalysed reaction is an N-acyl-L-alpha-aminoacyl-tRNA + H2O = an N-acyl-L-amino acid + a tRNA + H(+). In terms of biological role, hydrolyzes ribosome-free peptidyl-tRNAs (with 1 or more amino acids incorporated), which drop off the ribosome during protein synthesis, or as a result of ribosome stalling. Functionally, catalyzes the release of premature peptidyl moieties from peptidyl-tRNA molecules trapped in stalled 50S ribosomal subunits, and thus maintains levels of free tRNAs and 50S ribosomes. The sequence is that of Peptidyl-tRNA hydrolase from Rickettsia conorii (strain ATCC VR-613 / Malish 7).